The sequence spans 196 residues: ATP-dependent Clp protease proteolytic subunit (196 aa).

Ser-101 (nucleophile) is an active-site residue. Residue His-126 is part of the active site.

The protein belongs to the peptidase S14 family. As to quaternary structure, component of the chloroplastic Clp protease core complex.

It localises to the plastid. It is found in the chloroplast stroma. It carries out the reaction Hydrolysis of proteins to small peptides in the presence of ATP and magnesium. alpha-casein is the usual test substrate. In the absence of ATP, only oligopeptides shorter than five residues are hydrolyzed (such as succinyl-Leu-Tyr-|-NHMec, and Leu-Tyr-Leu-|-Tyr-Trp, in which cleavage of the -Tyr-|-Leu- and -Tyr-|-Trp bonds also occurs).. Cleaves peptides in various proteins in a process that requires ATP hydrolysis. Has a chymotrypsin-like activity. Plays a major role in the degradation of misfolded proteins. In Nasturtium officinale (Watercress), this protein is ATP-dependent Clp protease proteolytic subunit.